A 213-amino-acid polypeptide reads, in one-letter code: MPDENIFLFVPNLIGYARIVFAIISFYFMPCCPLTASSFYLLSGLLDAFDGHAARALNQGTRFGAMLDMLTDRCSTMCLLVNLALLYPGATLFFQISMSLDVASHWLHLHSSVVRGSESHKMIDLSGNPVLRIYYTSRPALFTLCAGNELFYCLLYLFHFSEGPLVGSVGLFRMGLWVTAPIALLKSLISVIHLITAARNMAALDAADRAKKK.

The Cytoplasmic portion of the chain corresponds to Met1 to Asn5. The chain crosses the membrane as a helical span at residues Ile6–Phe26. Position 27 (Tyr27) is a topological domain, lumenal. Residues Phe28–Ala48 traverse the membrane as a helical segment. 2 residues coordinate Mg(2+): Asp47 and Asp50. Topologically, residues Phe49–Arg73 are cytoplasmic. A CDP-1,2-diacyl-sn-glycerol is bound by residues Gly51, Arg55, and Thr61. The Mg(2+) site is built by Asp68 and Asp72. The Proton acceptor role is filled by Asp72. Residues Cys74–Phe94 traverse the membrane as a helical segment. Gln95 is a topological domain (lumenal). The chain crosses the membrane as a helical span at residues Ile96–Gly116. Residues Ser117–Pro139 lie on the Cytoplasmic side of the membrane. The chain crosses the membrane as a helical span at residues Ala140–Phe160. At Ser161 to Met174 the chain is on the lumenal side. A helical membrane pass occupies residues Gly175 to Ile195. The Cytoplasmic portion of the chain corresponds to Thr196–Lys213.

This sequence belongs to the CDP-alcohol phosphatidyltransferase class-I family. Requires Mn(2+) as cofactor. Mg(2+) is required as a cofactor. Detected in placenta (at protein level). Widely expressed. Higher expression in adult liver and skeletal muscle, slightly lower levels seen in pancreas, kidney, lung, placenta, brain, heart, leukocyte, colon, small intestine, ovary, testis, prostate, thymus and spleen. In fetus, expressed in kidney, liver, lung and brain.

It localises to the endoplasmic reticulum membrane. The protein localises to the cell membrane. It catalyses the reaction a CDP-1,2-diacyl-sn-glycerol + myo-inositol = a 1,2-diacyl-sn-glycero-3-phospho-(1D-myo-inositol) + CMP + H(+). Inhibited by PtdIns (product inhibition), phosphatidylinositol phosphate, and nucleoside di- and tri-phosphates. Its function is as follows. Catalyzes the biosynthesis of phosphatidylinositol (PtdIns) as well as PtdIns:inositol exchange reaction. May thus act to reduce an excessive cellular PtdIns content. The exchange activity is due to the reverse reaction of PtdIns synthase and is dependent on CMP, which is tightly bound to the enzyme. The chain is CDP-diacylglycerol--inositol 3-phosphatidyltransferase from Homo sapiens (Human).